The following is a 304-amino-acid chain: Coenzyme PQQ synthesis protein B (304 aa).

This sequence belongs to the PqqB family.

The protein operates within cofactor biosynthesis; pyrroloquinoline quinone biosynthesis. Functionally, may be involved in the transport of PQQ or its precursor to the periplasm. In Pseudomonas aeruginosa (strain ATCC 15692 / DSM 22644 / CIP 104116 / JCM 14847 / LMG 12228 / 1C / PRS 101 / PAO1), this protein is Coenzyme PQQ synthesis protein B.